The sequence spans 211 residues: Large ribosomal subunit protein uL3 (211 aa).

At Q151 the chain carries N5-methylglutamine.

This sequence belongs to the universal ribosomal protein uL3 family. As to quaternary structure, part of the 50S ribosomal subunit. Forms a cluster with proteins L14 and L19. Post-translationally, methylated by PrmB.

One of the primary rRNA binding proteins, it binds directly near the 3'-end of the 23S rRNA, where it nucleates assembly of the 50S subunit. The polypeptide is Large ribosomal subunit protein uL3 (Francisella tularensis subsp. tularensis (strain FSC 198)).